A 620-amino-acid polypeptide reads, in one-letter code: Glutathione-regulated potassium-efflux system protein KefC (620 aa).

Over 1-3 (MDS) the chain is Periplasmic. A helical membrane pass occupies residues 4 to 24 (HTLLQALIYLGSAALIVPIAV). A topological domain (cytoplasmic) is located at residue Arg-25. The chain crosses the membrane as a helical span at residues 26–46 (LGLGSVLGYLIAGCIIGPWGL). The Periplasmic portion of the chain corresponds to 47–53 (RLVTDAE). A helical transmembrane segment spans residues 54 to 74 (SILHFAEIGVVLMLFVIGLEL). Topologically, residues 75–89 (DPQRLWKLRASVFGG) are cytoplasmic. The helical transmembrane segment at 90 to 110 (GALQMVVCGGLIGLFCMFLGL) threads the bilayer. Residues 111–113 (RWQ) lie on the Periplasmic side of the membrane. A helical membrane pass occupies residues 114 to 134 (VAELIGMTLALSSTAIAMQAM). The Cytoplasmic segment spans residues 135–148 (NERNLTVSQVGRSA). Residues 149–169 (FAVLLFQDIAAIPLVAMIPLL) form a helical membrane-spanning segment. Residues 170 to 177 (AASGASTT) lie on the Periplasmic side of the membrane. The chain crosses the membrane as a helical span at residues 178–198 (LGAFALSALKVAGALALVVLL). Topologically, residues 199 to 213 (GRYVTRPALRFVARS) are cytoplasmic. The chain crosses the membrane as a helical span at residues 214-233 (GLREVFSAVALFLVFGFGLL). Residues 234–236 (LEE) are Periplasmic-facing. A helical transmembrane segment spans residues 237–254 (VGLSMAMGAFLAGVLLAS). Residues 255 to 269 (SEYRHALESDIEPFK) are Cytoplasmic-facing. Residues 270–290 (GLLLGLFFIGVGMSIDFGTLV) form a helical membrane-spanning segment. Residues 291–293 (ENP) are Periplasmic-facing. Residues 294-314 (LRILLLLAGFLAIKIVMLWLV) form a helical membrane-spanning segment. Topologically, residues 315–326 (ARTLGVPAKQRR) are cytoplasmic. A helical transmembrane segment spans residues 327 to 347 (WFAVLLGQGSEFAFVVFGAAQ). Residues 348–358 (MADVLEPEWAK) are Periplasmic-facing. A helical transmembrane segment spans residues 359–379 (ALTLAVALSMAATPIFLVLLT). Residues 380–620 (RMEKTATGEA…ADEPEVKPSI (241 aa)) lie on the Cytoplasmic side of the membrane. One can recognise an RCK N-terminal domain in the interval 399–518 (QPRVIVAGFG…AGVAMPERET (120 aa)). Residues 599–620 (QGTAEGKHSGKAADEPEVKPSI) are disordered. Positions 603–620 (EGKHSGKAADEPEVKPSI) are enriched in basic and acidic residues.

The protein belongs to the monovalent cation:proton antiporter 2 (CPA2) transporter (TC 2.A.37) family. KefC subfamily. As to quaternary structure, homodimer. Interacts with the regulatory subunit KefF.

It is found in the cell inner membrane. Pore-forming subunit of a potassium efflux system that confers protection against electrophiles. Catalyzes K(+)/H(+) antiport. The sequence is that of Glutathione-regulated potassium-efflux system protein KefC from Salmonella typhi.